The following is a 412-amino-acid chain: Protein arginine N-methyltransferase 2 (412 aa).

Residues 48-65 are compositionally biased toward basic and acidic residues; it reads EKNRNGDKEFRESTDDNK. Disordered regions lie at residues 48 to 69 and 169 to 189; these read EKNR…TSNT and SVQT…DDAT. Phosphoserine is present on residues S181 and S184. The 224-residue stretch at 189-412 folds into the RMT2 domain; sequence TAANQQVYLK…YYYHPRITFA (224 aa). S-adenosyl-L-methionine contacts are provided by residues Y196, M226, 250–255, 271–273, 298–299, and D319; these read FGMGII, EAH, and WQ.

Belongs to the class I-like SAM-binding methyltransferase superfamily. RMT2 methyltransferase family. In terms of assembly, monomer. Interacts with nucleoporins NUP49, NUP57 and NUP100.

It localises to the cytoplasm. The protein localises to the nucleus. Its function is as follows. S-adenosyl-L-methionine-dependent protein-arginine N-methyltransferase that methylates the delta-nitrogen atom of arginine residues to form N5-methylarginine (type IV) in target proteins. Monomethylates ribosomal protein L12 (RPL12A/RPL12B) at 'Arg-67'. This Saccharomyces cerevisiae (strain ATCC 204508 / S288c) (Baker's yeast) protein is Protein arginine N-methyltransferase 2.